The chain runs to 190 residues: Selenoprotein S (190 aa).

Residues 1–13 (MEAEDGARVRNED) are compositionally biased toward basic and acidic residues. Positions 1-20 (MEAEDGARVRNEDVPPQNQD) are disordered. A helical membrane pass occupies residues 30 to 50 (AFMSEYGWYLLFGCVGVYLLI). Residues 58–68 (SSTQTRSSSGS) show a composition bias toward low complexity. The tract at residues 58–190 (SSTQTRSSSG…RRGPSAGGUG (133 aa)) is disordered. Positions 79–120 (RRQEALEASRRRMQEEQDARAAEFREKQRMLEEEKRRQKIEM) are enriched in basic and acidic residues. Residues 136–151 (VAQQNTEEAASSSSLR) show a composition bias toward polar residues. Position 189 (selenocysteine 189) is a non-standard amino acid, selenocysteine.

It belongs to the selenoprotein S family.

The protein resides in the endoplasmic reticulum membrane. It is found in the cytoplasm. Involved in the degradation process of misfolded endoplasmic reticulum (ER) luminal proteins. Participates in the transfer of misfolded proteins from the ER to the cytosol, where they are destroyed by the proteasome in a ubiquitin-dependent manner. The chain is Selenoprotein S (vimp) from Danio rerio (Zebrafish).